A 188-amino-acid chain; its full sequence is Putative manganese efflux pump MntP (188 aa).

6 helical membrane passes run 3–23, 35–55, 63–83, 104–126, 140–160, and 167–187; these read FYAL…VALA, IAAT…AGWV, FISE…GLKM, WMTV…GLAF, MATT…GVLF, and AGGL…LGLI.

This sequence belongs to the MntP (TC 9.B.29) family.

It is found in the cell inner membrane. Functionally, probably functions as a manganese efflux pump. The chain is Putative manganese efflux pump MntP from Neisseria meningitidis serogroup B (strain ATCC BAA-335 / MC58).